A 511-amino-acid polypeptide reads, in one-letter code: Cytochrome P450 monooxygenase nodR (511 aa).

A helical membrane pass occupies residues 8–28 (ILFPISWEQSPIFLAVGLIFA). N-linked (GlcNAc...) asparagine glycans are attached at residues asparagine 76 and asparagine 373. Cysteine 452 serves as a coordination point for heme.

It belongs to the cytochrome P450 family. Heme serves as cofactor.

Its subcellular location is the membrane. It participates in secondary metabolite biosynthesis. Functionally, cytochrome P450 monooxygenase; part of the gene cluster that mediates the biosynthesis of the indole diterpenes nodulisporic acids (NA). Nodulisporic acid A (NAA) and its chemically modified derivatives are of particular significance because of their highly potent insecticidal activity against blood-feeding arthropods and lack of observable adverse effects on mammals, in particular the tremogenicity associated with the paspaline-derived IDTs is not observed. The geranylgeranyl diphosphate (GGPP) synthase ggs1, localized outside of the cluster, is proposed to catalyze the first step in nodulisporic acid biosynthesis via conversion of farnesyl pyrophosphate and isopentyl pyrophosphate into geranylgeranyl pyrophosphate (GGPP). Condensation of indole-3-glycerol phosphate with GGPP by the prenyl transferase nodC then forms 3-geranylgeranylindole (3-GGI). Epoxidation by the FAD-dependent monooxygenase nodM leads to a single-epoxidized-GGI that is substrate of the terpene cyclase nodB for cyclization to yield emindole SB. The terminal methyl carbon, C28, of emindole SB is then oxidized by the cytochrome P450 monooxygenase nodW to produce nodulisporic acid F (NAF), the pentacyclic core of NAA. NAF is converted to nodulisporic acid E (NAE) via prenylation. This step is probably performed by one of the indole diterpene prenyltransferases nodD1 or nodD2. Several oxidation steps performed by the FAD-linked oxidoreductase nodO and one of the cytochrome P450 monooxygenase nodR, nodX or nodZ further convert NAE to nodulisporic acid D (NAD). NAD is substrate of cytochrome P450 monooxygenase nodJ to produce the precursor of nodulisporic acid C (NAC), converted to NAC by one of the indole diterpene prenyltransferases nodD1 or nodD2. The FAD-dependent monooxygenase nodY2 then oxidizes NAC to nodulisporic acid B (NAB). Finally NAB is converted to NAA by one of the cytochrome P450 monooxygenases nodR, nodX or nodZ. This chain is Cytochrome P450 monooxygenase nodR, found in Hypoxylon pulicicidum.